The sequence spans 106 residues: Cytochrome c (106 aa).

Cys-17, Cys-20, and His-21 together coordinate heme c. Lys-75 carries the N6,N6,N6-trimethyllysine modification. Residue Met-83 coordinates heme c.

It belongs to the cytochrome c family. Post-translationally, binds 1 heme c group covalently per subunit.

It is found in the mitochondrion intermembrane space. In terms of biological role, electron carrier protein. The oxidized form of the cytochrome c heme group can accept an electron from the heme group of the cytochrome c1 subunit of cytochrome reductase. Cytochrome c then transfers this electron to the cytochrome oxidase complex, the final protein carrier in the mitochondrial electron-transport chain. In Gibberella zeae (strain ATCC MYA-4620 / CBS 123657 / FGSC 9075 / NRRL 31084 / PH-1) (Wheat head blight fungus), this protein is Cytochrome c (CYC1).